The primary structure comprises 190 residues: MAFAGTTQKCMACDKTVYLVDKLTADNRVYHKACFRCHHCKGTLKLSNYNSFEGVLYCRPHFDQNFKRTGSLEKSFEGTPKIGKPDRPLEGERPAGTKVSNMFGGTREKCVGCDKTVYPIEKVSVNGTLYHKSCFKCTHGGCTISPSNYIAHEGKLYCKHHHIQLIKEKGNLSQLEGGGENAAKDKVVAA.

At Ala-2 the chain carries N-acetylalanine. The region spanning 8-68 (QKCMACDKTV…RPHFDQNFKR (61 aa)) is the LIM zinc-binding 1 domain. Residues 74-98 (KSFEGTPKIGKPDRPLEGERPAGTK) are disordered. Over residues 83–95 (GKPDRPLEGERPA) the composition is skewed to basic and acidic residues. The 61-residue stretch at 108 to 168 (EKCVGCDKTV…KHHHIQLIKE (61 aa)) folds into the LIM zinc-binding 2 domain.

In terms of assembly, interacts with F-actin. In terms of tissue distribution, expressed in roots, leaves, stems, flowers and siliques. Not detected in pollen.

The protein localises to the cytoplasm. It is found in the cytoskeleton. Binds to actin filaments and promotes cross-linking into thick bundles. Has an actin-stabilizing activity. The actin regulatory activities are not regulated by pH and [Ca(2+)]. The polypeptide is LIM domain-containing protein WLIM1 (Arabidopsis thaliana (Mouse-ear cress)).